The following is a 63-amino-acid chain: Large ribosomal subunit protein uL29 (63 aa).

The protein belongs to the universal ribosomal protein uL29 family.

The sequence is that of Large ribosomal subunit protein uL29 from Pseudomonas aeruginosa (strain UCBPP-PA14).